We begin with the raw amino-acid sequence, 552 residues long: HTH-type transcriptional regulator SgrR (552 aa).

Residues Glu-163–Trp-493 form a solute-binding region.

Functionally, activates the small RNA gene sgrS under glucose-phosphate stress conditions as well as yfdZ. Represses its own transcription under both stress and non-stress conditions. Might act as a sensor of the intracellular accumulation of phosphoglucose by binding these molecules in its C-terminal solute-binding domain. The sequence is that of HTH-type transcriptional regulator SgrR from Pectobacterium atrosepticum (strain SCRI 1043 / ATCC BAA-672) (Erwinia carotovora subsp. atroseptica).